The chain runs to 343 residues: Protein SOSEKI 4 (343 aa).

A DIX-like oligomerization domain region spans residues 18–109 (RIVPVVYYLS…YVLKGSQILD (92 aa)). A disordered region spans residues 148–194 (RKLSMDASTQTDDRRRRKSPVDEVNEVTELSREEITSPPQSDSSPET). A compositionally biased stretch (polar residues) spans 184 to 194 (SPPQSDSSPET). An Association to cell membranes motif is present at residues 233–234 (CG).

Belongs to the SOSEKI family. Homodimer. Forms long polymer filaments with other SOKs proteins polymers (e.g. SOK1, SOK2, SOK3 and SOK4) crucial for polar localization and biological activity. Binds to ANGUSTIFOLIA (AN). In terms of tissue distribution, expressed during embryogenesis and in roots.

The protein resides in the cell membrane. Functionally, SOSEKI proteins (SOK1-5) locally interpret global polarity cues and can influence cell division orientation to coordinate cell polarization relative to body axes, probably by guiding ANGUSTIFOLIA (AN) polarized localization. Positive regulator of auxin (indole-3-acetic acid, IAA) biosynthesis and signaling pathway leading to the modulation of seedling growth, plant and inflorescence development. Negative regulator of stress responses (e.g. salinity and osmotic stress). This Arabidopsis thaliana (Mouse-ear cress) protein is Protein SOSEKI 4.